Here is a 426-residue protein sequence, read N- to C-terminus: Histidine--tRNA ligase (426 aa).

The protein belongs to the class-II aminoacyl-tRNA synthetase family. As to quaternary structure, homodimer.

The protein localises to the cytoplasm. It catalyses the reaction tRNA(His) + L-histidine + ATP = L-histidyl-tRNA(His) + AMP + diphosphate + H(+). The sequence is that of Histidine--tRNA ligase from Picosynechococcus sp. (strain ATCC 27264 / PCC 7002 / PR-6) (Agmenellum quadruplicatum).